Here is a 479-residue protein sequence, read N- to C-terminus: Protein C-ets-2 (479 aa).

The 86-residue stretch at 88-173 (DTFSGFTKEQ…EHLEQMIKDS (86 aa)) folds into the PNT domain. A DNA-binding region (ETS) is located at residues 373–453 (IQLWQFLLEL…SGKRYVYRFV (81 aa)).

This sequence belongs to the ETS family.

It localises to the nucleus. Functionally, probable transcription factor. The chain is Protein C-ets-2 (ETS2) from Gallus gallus (Chicken).